A 654-amino-acid chain; its full sequence is Acetyl-coenzyme A synthetase (654 aa).

CoA is bound by residues 196-199 (RGGK) and Thr-316. ATP contacts are provided by residues 392–394 (GEP), 416–421 (DTWWQT), Asp-507, and Arg-522. Ser-530 is a binding site for CoA. Position 533 (Arg-533) interacts with ATP. Residues Val-544 and Val-549 each contribute to the Mg(2+) site. Lys-619 carries the N6-acetyllysine modification.

The protein belongs to the ATP-dependent AMP-binding enzyme family. It depends on Mg(2+) as a cofactor. In terms of processing, acetylated. Deacetylation by the SIR2-homolog deacetylase activates the enzyme.

It carries out the reaction acetate + ATP + CoA = acetyl-CoA + AMP + diphosphate. Its function is as follows. Catalyzes the conversion of acetate into acetyl-CoA (AcCoA), an essential intermediate at the junction of anabolic and catabolic pathways. AcsA undergoes a two-step reaction. In the first half reaction, AcsA combines acetate with ATP to form acetyl-adenylate (AcAMP) intermediate. In the second half reaction, it can then transfer the acetyl group from AcAMP to the sulfhydryl group of CoA, forming the product AcCoA. In Chromobacterium violaceum (strain ATCC 12472 / DSM 30191 / JCM 1249 / CCUG 213 / NBRC 12614 / NCIMB 9131 / NCTC 9757 / MK), this protein is Acetyl-coenzyme A synthetase.